A 426-amino-acid polypeptide reads, in one-letter code: Dihydroorotase (426 aa).

Zn(2+)-binding residues include His58 and His60. Residues 60 to 62 (HLR) and Asn92 contribute to the substrate site. 3 residues coordinate Zn(2+): Asp150, His177, and His230. Asn276 contributes to the substrate binding site. Asp303 lines the Zn(2+) pocket. The active site involves Asp303. Substrate contacts are provided by residues His307 and 321 to 322 (FG).

Belongs to the metallo-dependent hydrolases superfamily. DHOase family. Class I DHOase subfamily. Requires Zn(2+) as cofactor.

The catalysed reaction is (S)-dihydroorotate + H2O = N-carbamoyl-L-aspartate + H(+). It functions in the pathway pyrimidine metabolism; UMP biosynthesis via de novo pathway; (S)-dihydroorotate from bicarbonate: step 3/3. In terms of biological role, catalyzes the reversible cyclization of carbamoyl aspartate to dihydroorotate. This is Dihydroorotase from Listeria welshimeri serovar 6b (strain ATCC 35897 / DSM 20650 / CCUG 15529 / CIP 8149 / NCTC 11857 / SLCC 5334 / V8).